The chain runs to 464 residues: MSTAALVEGKIVQCIGAVIDVEFPRDSMPKIYDALILDGSELTLEVQQQLGDGVVRTICLGASDGLRRGLTVKNTAKPISVPVGKPTLGRIMDVLGRPIDEAGPIESDVTRSIHQKAPAFDELSPSTELLETGIKVIDLICPFAKGGKVGLFGGAGVGKTVNMMELINNIAKEHGGYSVFAGVGERTREGNDFYHEMKDSNVLDKVALVYGQMNEPPGNRLRVALTGLTMAEHFRDEGLDVLFFVDNIYRFTLAGTEVSALLGRMPSAVGYQPTLAEEMGKLQERITSTKKGSITSVQAVYVPADDLTDPSPATTFGHLDATVVLSRDIASLGIYPAVDPLDSTSRQIDPNVIGEEHYSITRRVQQTLQRYKELRDIIAILGMDELSPEDKLSVARARKIQRFLSQPFHVAEVFTGSPGKYVPLKETIRGFKMIVDGECDHLPEQAFYMVGTIDEAFEKAKKIQ.

153–160 provides a ligand contact to ATP; sequence GGAGVGKT.

It belongs to the ATPase alpha/beta chains family. As to quaternary structure, F-type ATPases have 2 components, CF(1) - the catalytic core - and CF(0) - the membrane proton channel. CF(1) has five subunits: alpha(3), beta(3), gamma(1), delta(1), epsilon(1). CF(0) has three main subunits: a(1), b(2) and c(9-12). The alpha and beta chains form an alternating ring which encloses part of the gamma chain. CF(1) is attached to CF(0) by a central stalk formed by the gamma and epsilon chains, while a peripheral stalk is formed by the delta and b chains.

It is found in the cell inner membrane. The enzyme catalyses ATP + H2O + 4 H(+)(in) = ADP + phosphate + 5 H(+)(out). Produces ATP from ADP in the presence of a proton gradient across the membrane. The catalytic sites are hosted primarily by the beta subunits. This is ATP synthase subunit beta from Burkholderia orbicola (strain MC0-3).